Reading from the N-terminus, the 138-residue chain is Hydrogenase maturation factor HypA (138 aa).

Ni(2+) is bound at residue histidine 2. Cysteine 73, cysteine 76, cysteine 110, and cysteine 113 together coordinate Zn(2+).

Belongs to the HypA/HybF family.

Its function is as follows. Involved in the maturation of [NiFe] hydrogenases. Required for nickel insertion into the metal center of the hydrogenase. The sequence is that of Hydrogenase maturation factor HypA from Thermococcus sibiricus (strain DSM 12597 / MM 739).